The primary structure comprises 205 residues: Holliday junction branch migration complex subunit RuvA (205 aa).

Positions 1–65 are domain I; sequence MIAKLKGILD…EDRIHLFGFL (65 aa). The segment at 66–144 is domain II; sequence DNTEKVAFNM…NINTIANNTS (79 aa). Residues 145–153 form a flexible linker region; sequence LAILSTDSN. Positions 154–205 are domain III; sequence THDNILSDAITALIALGISRAEATQILSDIYALFPSISVNELVRTALQRRAK.

This sequence belongs to the RuvA family. In terms of assembly, homotetramer. Forms an RuvA(8)-RuvB(12)-Holliday junction (HJ) complex. HJ DNA is sandwiched between 2 RuvA tetramers; dsDNA enters through RuvA and exits via RuvB. An RuvB hexamer assembles on each DNA strand where it exits the tetramer. Each RuvB hexamer is contacted by two RuvA subunits (via domain III) on 2 adjacent RuvB subunits; this complex drives branch migration. In the full resolvosome a probable DNA-RuvA(4)-RuvB(12)-RuvC(2) complex forms which resolves the HJ.

It is found in the cytoplasm. Its function is as follows. The RuvA-RuvB-RuvC complex processes Holliday junction (HJ) DNA during genetic recombination and DNA repair, while the RuvA-RuvB complex plays an important role in the rescue of blocked DNA replication forks via replication fork reversal (RFR). RuvA specifically binds to HJ cruciform DNA, conferring on it an open structure. The RuvB hexamer acts as an ATP-dependent pump, pulling dsDNA into and through the RuvAB complex. HJ branch migration allows RuvC to scan DNA until it finds its consensus sequence, where it cleaves and resolves the cruciform DNA. In Orientia tsutsugamushi (strain Boryong) (Rickettsia tsutsugamushi), this protein is Holliday junction branch migration complex subunit RuvA.